The sequence spans 719 residues: Photosystem I P700 chlorophyll a apoprotein A1 (719 aa).

The next 8 membrane-spanning stretches (helical) occupy residues 61–84, 147–170, 186–210, 282–300, 337–360, 376–402, 424–446, and 522–540; these read VFSA…FHGA, LYCT…FHYH, LNHH…HVSL, TAHH…GHMY, WHAQ…HHMY, LSLF…IFMV, AIVS…LYIH, and FLVH…LILL. [4Fe-4S] cluster-binding residues include Cys564 and Cys573. The next 2 membrane-spanning stretches (helical) occupy residues 580–601 and 655–677; these read HVFL…HFSW and LSAY…MFLF. His666 provides a ligand contact to chlorophyll a'. Chlorophyll a is bound by residues Met674 and Tyr682. Position 683 (Trp683) interacts with phylloquinone. The helical transmembrane segment at 715 to 719 threads the bilayer; that stretch reads AVGVA.

This sequence belongs to the PsaA/PsaB family. As to quaternary structure, the PsaA/B heterodimer binds the P700 chlorophyll special pair and subsequent electron acceptors. PSI consists of a core antenna complex that captures photons, and an electron transfer chain that converts photonic excitation into a charge separation. The eukaryotic PSI reaction center is composed of at least 11 subunits. The cofactor is P700 is a chlorophyll a/chlorophyll a' dimer, A0 is one or more chlorophyll a, A1 is one or both phylloquinones and FX is a shared 4Fe-4S iron-sulfur center..

The protein localises to the plastid. It is found in the chloroplast thylakoid membrane. The catalysed reaction is reduced [plastocyanin] + hnu + oxidized [2Fe-2S]-[ferredoxin] = oxidized [plastocyanin] + reduced [2Fe-2S]-[ferredoxin]. Its function is as follows. PsaA and PsaB bind P700, the primary electron donor of photosystem I (PSI), as well as the electron acceptors A0, A1 and FX. PSI is a plastocyanin-ferredoxin oxidoreductase, converting photonic excitation into a charge separation, which transfers an electron from the donor P700 chlorophyll pair to the spectroscopically characterized acceptors A0, A1, FX, FA and FB in turn. Oxidized P700 is reduced on the lumenal side of the thylakoid membrane by plastocyanin. This is Photosystem I P700 chlorophyll a apoprotein A1 from Torreya californica (California nutmeg).